Consider the following 277-residue polypeptide: MKRKPAVAGLFYPSRRDELVEQIRICFLDKRIGPGELPDPSETKLQSPIGFVSPHAGYIYSGPVAAWGFLEVAKFGEPSVVVIIGPNHTGLGRPVGVWPEGEWETPLGTVPVNQRAAEIILNSSRYAEEDFMSHIREHSIEVQIPFLQFVFGDVSIVPICLMDQSPAVAEDLANALTKLVAEFPSVLIIASTDLNHYEDQRTTLRKDSYIMEAIRNKDPRLLYEYLVKEDISMCGYGGVATLLNMNFKNARILKHATSGDVSGDKLEVVGYLSAILF.

It belongs to the MEMO1 family.

The chain is MEMO1 family protein Tpet_0837 from Thermotoga petrophila (strain ATCC BAA-488 / DSM 13995 / JCM 10881 / RKU-1).